A 239-amino-acid chain; its full sequence is Hydroxyacylglutathione hydrolase (239 aa).

7 residues coordinate Zn(2+): histidine 54, histidine 56, aspartate 58, histidine 59, histidine 112, aspartate 131, and histidine 169.

Belongs to the metallo-beta-lactamase superfamily. Glyoxalase II family. As to quaternary structure, monomer. Zn(2+) is required as a cofactor.

It catalyses the reaction an S-(2-hydroxyacyl)glutathione + H2O = a 2-hydroxy carboxylate + glutathione + H(+). Its pathway is secondary metabolite metabolism; methylglyoxal degradation; (R)-lactate from methylglyoxal: step 2/2. In terms of biological role, thiolesterase that catalyzes the hydrolysis of S-D-lactoyl-glutathione to form glutathione and D-lactic acid. The protein is Hydroxyacylglutathione hydrolase of Pelagibacter ubique (strain HTCC1062).